The sequence spans 429 residues: Glutamate-1-semialdehyde 2,1-aminomutase (429 aa).

Residue K265 is modified to N6-(pyridoxal phosphate)lysine.

This sequence belongs to the class-III pyridoxal-phosphate-dependent aminotransferase family. HemL subfamily. As to quaternary structure, homodimer. The cofactor is pyridoxal 5'-phosphate.

The protein localises to the cytoplasm. The catalysed reaction is (S)-4-amino-5-oxopentanoate = 5-aminolevulinate. Its pathway is porphyrin-containing compound metabolism; protoporphyrin-IX biosynthesis; 5-aminolevulinate from L-glutamyl-tRNA(Glu): step 2/2. The protein is Glutamate-1-semialdehyde 2,1-aminomutase of Chromohalobacter salexigens (strain ATCC BAA-138 / DSM 3043 / CIP 106854 / NCIMB 13768 / 1H11).